Reading from the N-terminus, the 511-residue chain is Histidine ammonia-lyase (511 aa).

Residues 142–144 constitute a cross-link (5-imidazolinone (Ala-Gly)); that stretch reads ASG. Serine 143 is modified (2,3-didehydroalanine (Ser)).

Belongs to the PAL/histidase family. Post-translationally, contains an active site 4-methylidene-imidazol-5-one (MIO), which is formed autocatalytically by cyclization and dehydration of residues Ala-Ser-Gly.

It localises to the cytoplasm. It carries out the reaction L-histidine = trans-urocanate + NH4(+). It participates in amino-acid degradation; L-histidine degradation into L-glutamate; N-formimidoyl-L-glutamate from L-histidine: step 1/3. The polypeptide is Histidine ammonia-lyase (Brucella anthropi (strain ATCC 49188 / DSM 6882 / CCUG 24695 / JCM 21032 / LMG 3331 / NBRC 15819 / NCTC 12168 / Alc 37) (Ochrobactrum anthropi)).